Consider the following 318-residue polypeptide: BES1/BZR1 homolog protein 2 (318 aa).

The segment covering 1–13 (MAAGGGGGGGGSS) has biased composition (gly residues). Disordered stretches follow at residues 1–34 (MAAG…RRRR), 84–133 (FKPP…PSPS), 166–195 (NSAP…PNGG), and 209–231 (APSS…CDES). The tract at residues 16–97 (RTPTWKEREN…ASDISGTPTN (82 aa)) is required for DNA-binding. Residues 91-101 (ISGTPTNFSTN) are compositionally biased toward polar residues. Positions 102 to 133 (SSIQPSPQSSAFPSPAPSYHGSPVSSSFPSPS) are enriched in low complexity.

This sequence belongs to the BZR/LAT61 family. In terms of processing, phosphorylated. Phosphorylation increases protein degradation.

This is BES1/BZR1 homolog protein 2 (BEH2) from Arabidopsis thaliana (Mouse-ear cress).